Reading from the N-terminus, the 641-residue chain is Pumilio homolog 24 (641 aa).

The interval 1–82 (MSSKGLKPQK…LTEARKKKRK (82 aa)) is disordered. The region spanning 9–404 (QKSTKRKDTD…RPLLQLLHPN (396 aa)) is the PUM-HD domain. 2 stretches are compositionally biased toward basic and acidic residues: residues 14–27 (RKDTDSSAKFDSLK) and 67–76 (RVQAKELTEA). Pumilio repeat units lie at residues 118–153 (KMKGKVPEIAVSHVSSRVLQTCVKFCSQAEKDVLFT), 154–189 (ELQPQFLNLASNKYAVHFIQKMLDGASKQQLAACIS), 190–225 (SLRGHVAPLLRHVFGSLVVEHAYHLGSAAQKQELLA), 303–340 (QLLTGSLLLRMVHTRDGSRLAMLSIKHGSAKERKKIIK), and 341–378 (AMKEHVKKMAFDQFGSMVLACIFSIVDDTKLVTKIIVR). The segment at 427-468 (MDKSETSSKTKDTDGNEIGEETKDEQEDTVAEHSDHEENVTA) is disordered. Residues 428 to 440 (DKSETSSKTKDTD) show a composition bias toward basic and acidic residues. Over residues 441-455 (GNEIGEETKDEQEDT) the composition is skewed to acidic residues. Over residues 456-468 (VAEHSDHEENVTA) the composition is skewed to basic and acidic residues.

Its subcellular location is the nucleus. The protein resides in the nucleolus. Functionally, sequence-specific RNA-binding protein that regulates translation and mRNA stability by binding the 3'-UTR of target mRNAs. The sequence is that of Pumilio homolog 24 (APUM24) from Arabidopsis thaliana (Mouse-ear cress).